The following is a 1218-amino-acid chain: Coatomer subunit alpha-2 (1218 aa).

WD repeat units lie at residues 7–48 (TKSN…DRFD), 49–88 (EHEG…CLFT), 91–132 (GHLD…SVLT), 133–172 (GHNH…KKSA), 202–241 (GHDR…AWEV), 246–285 (GHMN…GIQT), 288–326 (REHD…PAFA), and 363–404 (SLNQ…VGRS). Residues 826 to 849 (NRGAVDEEEEDVEGDWGEGLDKFD) are disordered. Acidic residues predominate over residues 831-843 (DEEEEDVEGDWGE).

As to quaternary structure, oligomeric complex that consists of at least the alpha, beta, beta', gamma, delta, epsilon and zeta subunits.

The protein localises to the cytoplasm. It is found in the golgi apparatus membrane. Its subcellular location is the cytoplasmic vesicle. It localises to the COPI-coated vesicle membrane. Functionally, the coatomer is a cytosolic protein complex that binds to dilysine motifs and reversibly associates with Golgi non-clathrin-coated vesicles, which further mediate biosynthetic protein transport from the ER, via the Golgi up to the trans Golgi network. Coatomer complex is required for budding from Golgi membranes, and is essential for the retrograde Golgi-to-ER transport of dilysine-tagged proteins. This is Coatomer subunit alpha-2 from Arabidopsis thaliana (Mouse-ear cress).